A 488-amino-acid polypeptide reads, in one-letter code: Probable (S)-N-methylcoclaurine 3'-hydroxylase isozyme 2 (488 aa).

A helical transmembrane segment spans residues 2–21; sequence EVLSIAIVSFSFLLFLFFIL. Residue C427 participates in heme binding.

This sequence belongs to the cytochrome P450 family. The cofactor is heme. In terms of tissue distribution, expressed at low levels in roots.

The protein resides in the endoplasmic reticulum membrane. The protein localises to the microsome membrane. It catalyses the reaction (S)-N-methylcoclaurine + reduced [NADPH--hemoprotein reductase] + O2 = (S)-3'-hydroxy-N-methylcoclaurine + oxidized [NADPH--hemoprotein reductase] + H2O + H(+). It participates in alkaloid biosynthesis; (S)-reticuline biosynthesis; (S)-reticuline from (S)-norcoclaurine: step 3/4. Its function is as follows. 3'-hydroxylation of (S)-N-methylcoclaurine. This Coptis japonica (Japanese goldthread) protein is Probable (S)-N-methylcoclaurine 3'-hydroxylase isozyme 2 (CYP80B2).